We begin with the raw amino-acid sequence, 624 residues long: MAIVSSVPLASKSCLHKSLISSIHKLKPFCRTIPTLGMSRPGKYVMPSMSMSSPVSDDGVQRRTGGYHSNLWNDDIIQFLSTPYGEPAYRERGERLIDEVKNMFNSISMEDVEFSPLNDLIQRLWIVDSVERLGIDRHFKNEIKSTLDYVYSYWTQKGIGCGIESVVPDLNSTALGLRTLRLHGYPVSAEVLKHFQNQNGQFACSPSETEGEMRSIVNLYRASLIAFPGEKVMEEAEIFSTKYLKEALQKIPVSSLSREIGDVLEQDWHTNLPRLEARNYIDVFGQDTKDTKLYMKTEKLLELAKLEFNIFQSLQKTELDSLLRWWKDSGFPHITFSRHLHVEYYTLASCIAFEPQHSRFRLGFAKACHVITILDDMYDVFGTIDELELFTAQIKRWDPSATDCLPKYMKRMYMILYDMVNEMSREAETAQGRDTLNYARQAWEDFIDSYMQEAKWIATGYLPTFDEYFENGKVSSGHRVAALQPILTMDIPFPHDILKEVDFPSKLNDLASAILRLRGDTRCYKADRARGEEASCISCYMKDNPGATEEDALSHINAVISDVIKGLNWELLNPNSSVPISSKKHVFDVSRALHYGYKYRDGYSVSNIETKSLVMRTLLESVPF.

The N-terminal 48 residues, 1-48 (MAIVSSVPLASKSCLHKSLISSIHKLKPFCRTIPTLGMSRPGKYVMPS), are a transit peptide targeting the chloroplast. Mg(2+)-binding residues include Asp375, Asp379, and Asp527. Residues 375-379 (DDMYD) carry the DDXXD motif motif.

It belongs to the terpene synthase family. Tpsd subfamily. The cofactor is Mg(2+). Mn(2+) is required as a cofactor.

It localises to the plastid. Its subcellular location is the chloroplast. The catalysed reaction is (2E)-geranyl diphosphate = (-)-beta-phellandrene + diphosphate. It participates in terpene metabolism; oleoresin biosynthesis. Terpene synthase (TPS) involved in the biosynthesis of monoterpene natural products included in conifer oleoresin secretions and volatile emissions; these compounds contribute to biotic and abiotic stress defense against herbivores and pathogens. Catalyzes the conversion of (2E)-geranyl diphosphate (GPP) to (-)-beta-phellandrene. This chain is (-)-beta-phellandrene synthase 1, chloroplastic, found in Picea sitchensis (Sitka spruce).